The sequence spans 229 residues: Protein fmp52-2, mitochondrial (229 aa).

Residues 1 to 44 constitute a mitochondrion transit peptide; the sequence is MTAAAVFGCTGAVGSQILATLLASDAFSSVATVSRKLPTAESPK.

This sequence belongs to the FMP52 family.

It localises to the mitochondrion outer membrane. This chain is Protein fmp52-2, mitochondrial (fmp522), found in Aspergillus terreus (strain NIH 2624 / FGSC A1156).